Here is a 373-residue protein sequence, read N- to C-terminus: Zinc finger CCCH domain-containing protein 15 homolog (373 aa).

The segment at 1–27 (MPPKQAQSKKTVEKEKKKKVEDKTFGL) is disordered. Basic and acidic residues predominate over residues 10-25 (KTVEKEKKKKVEDKTF). C3H1-type zinc fingers lie at residues 95-123 (DPKS…HDLA) and 167-205 (KPTA…HCLP). The stretch at 252–326 (KEEKRLQKEK…ALANQINTSL (75 aa)) forms a coiled coil. The tract at residues 325-373 (SLFTDGGVLPSDDDDDDDDDDDDDEDGDDEEEDDDEEEGEYEEEEASDE) is disordered. A compositionally biased stretch (acidic residues) spans 335-373 (SDDDDDDDDDDDDDEDGDDEEEDDDEEEGEYEEEEASDE).

Belongs to the ZC3H15/TMA46 family.

This chain is Zinc finger CCCH domain-containing protein 15 homolog, found in Dictyostelium discoideum (Social amoeba).